The following is a 134-amino-acid chain: Homeobox protein ceh-5 (134 aa).

Positions 35 to 94 (PKRPRTVFTDEQLEKLEESFNTSGYLSGSTRAKLAESLGLSDNQVKVWFQNRRTKQKKID) form a DNA-binding region, homeobox.

It is found in the nucleus. The protein is Homeobox protein ceh-5 (ceh-5) of Caenorhabditis elegans.